The chain runs to 364 residues: Chorismate synthase (364 aa).

NADP(+)-binding residues include R48 and R54. FMN contacts are provided by residues 125–127, 238–239, G278, 293–297, and R319; these read RSS, NA, and KPTSS.

Belongs to the chorismate synthase family. In terms of assembly, homotetramer. Requires FMNH2 as cofactor.

It catalyses the reaction 5-O-(1-carboxyvinyl)-3-phosphoshikimate = chorismate + phosphate. It participates in metabolic intermediate biosynthesis; chorismate biosynthesis; chorismate from D-erythrose 4-phosphate and phosphoenolpyruvate: step 7/7. In terms of biological role, catalyzes the anti-1,4-elimination of the C-3 phosphate and the C-6 proR hydrogen from 5-enolpyruvylshikimate-3-phosphate (EPSP) to yield chorismate, which is the branch point compound that serves as the starting substrate for the three terminal pathways of aromatic amino acid biosynthesis. This reaction introduces a second double bond into the aromatic ring system. This is Chorismate synthase from Marinobacter nauticus (strain ATCC 700491 / DSM 11845 / VT8) (Marinobacter aquaeolei).